A 190-amino-acid chain; its full sequence is Xanthine phosphoribosyltransferase (190 aa).

Positions 20 and 27 each coordinate xanthine. 128 to 132 (ANGKA) lines the 5-phospho-alpha-D-ribose 1-diphosphate pocket. Residue K156 participates in xanthine binding.

It belongs to the purine/pyrimidine phosphoribosyltransferase family. Xpt subfamily. As to quaternary structure, homodimer.

It localises to the cytoplasm. The catalysed reaction is XMP + diphosphate = xanthine + 5-phospho-alpha-D-ribose 1-diphosphate. It functions in the pathway purine metabolism; XMP biosynthesis via salvage pathway; XMP from xanthine: step 1/1. Converts the preformed base xanthine, a product of nucleic acid breakdown, to xanthosine 5'-monophosphate (XMP), so it can be reused for RNA or DNA synthesis. This chain is Xanthine phosphoribosyltransferase, found in Stutzerimonas stutzeri (strain A1501) (Pseudomonas stutzeri).